The sequence spans 107 residues: EPIDERMAL PATTERNING FACTOR-like protein 3 (107 aa).

Residues 1-24 (MEYMFLLMSKFFFVFPIIIYIGPA) form the signal peptide. Disulfide bonds link cysteine 64–cysteine 102, cysteine 68–cysteine 74, and cysteine 71–cysteine 104.

This sequence belongs to the plant cysteine rich small secretory peptide family. Epidermal patterning factor subfamily.

It localises to the secreted. Functionally, controls stomatal patterning. This chain is EPIDERMAL PATTERNING FACTOR-like protein 3, found in Arabidopsis thaliana (Mouse-ear cress).